A 497-amino-acid polypeptide reads, in one-letter code: C4-dicarboxylate transport protein (497 aa).

A run of 8 helical transmembrane segments spans residues 27 to 45 (LYVQ…GYFY), 60 to 82 (IMLV…IAGM), 95 to 117 (AMIY…ANVV), 168 to 185 (ILQV…LAIV), 205 to 227 (RLVA…FTIG), 237 to 259 (LAML…LGAV), 348 to 370 (ILLL…AGFI), and 374 to 393 (ATLS…ILGI). A disordered region spans residues 466 to 497 (ADRTLAGRPGGRDSRRIAPDHSAQVFGGPLSL). The span at 475–484 (GGRDSRRIAP) shows a compositional bias: basic and acidic residues.

The protein belongs to the dicarboxylate/amino acid:cation symporter (DAACS) (TC 2.A.23) family.

Its subcellular location is the cell inner membrane. Responsible for the transport of dicarboxylates such as succinate, fumarate, and malate from the periplasm across the inner membrane. This transport system plays an essential role in the energy supply of tropical rhizobium-legume symbionts. The protein is C4-dicarboxylate transport protein (dctA1) of Sinorhizobium fredii (strain NBRC 101917 / NGR234).